A 1205-amino-acid chain; its full sequence is Chromosome partition protein Smc (1205 aa).

32–39 (PNGSGKSN) provides a ligand contact to ATP. 2 coiled-coil regions span residues 169-288 (KHRK…SIQH) and 330-499 (EELE…GLQR). The SMC hinge domain occupies 514–628 (GLFGSIAQLV…VNDLTEAMGL (115 aa)). 3 coiled-coil regions span residues 661–771 (LEVT…AQET), 802–836 (AVRTAEERANAVRGRADSLRRAAAAEREARVRAQQ), and 979–1033 (DRVT…KDLL).

The protein belongs to the SMC family. In terms of assembly, homodimer.

The protein localises to the cytoplasm. Required for chromosome condensation and partitioning. This Mycobacterium tuberculosis (strain ATCC 25618 / H37Rv) protein is Chromosome partition protein Smc.